Consider the following 284-residue polypeptide: Bifunctional protein FolD 2 (284 aa).

Residues Gly166–Ser168 and Ile232 contribute to the NADP(+) site.

Belongs to the tetrahydrofolate dehydrogenase/cyclohydrolase family. Homodimer.

It catalyses the reaction (6R)-5,10-methylene-5,6,7,8-tetrahydrofolate + NADP(+) = (6R)-5,10-methenyltetrahydrofolate + NADPH. It carries out the reaction (6R)-5,10-methenyltetrahydrofolate + H2O = (6R)-10-formyltetrahydrofolate + H(+). It participates in one-carbon metabolism; tetrahydrofolate interconversion. Catalyzes the oxidation of 5,10-methylenetetrahydrofolate to 5,10-methenyltetrahydrofolate and then the hydrolysis of 5,10-methenyltetrahydrofolate to 10-formyltetrahydrofolate. This Pseudomonas putida (strain ATCC 47054 / DSM 6125 / CFBP 8728 / NCIMB 11950 / KT2440) protein is Bifunctional protein FolD 2.